We begin with the raw amino-acid sequence, 482 residues long: 23S rRNA (uracil(1939)-C(5))-methyltransferase RlmD (482 aa).

Cys-85, Cys-95, Cys-98, and Cys-177 together coordinate [4Fe-4S] cluster. Gln-285, Phe-314, Asn-319, Glu-335, Asn-370, and Asp-391 together coordinate S-adenosyl-L-methionine. Cys-438 acts as the Nucleophile in catalysis.

It belongs to the class I-like SAM-binding methyltransferase superfamily. RNA M5U methyltransferase family. RlmD subfamily.

It catalyses the reaction uridine(1939) in 23S rRNA + S-adenosyl-L-methionine = 5-methyluridine(1939) in 23S rRNA + S-adenosyl-L-homocysteine + H(+). Functionally, catalyzes the formation of 5-methyl-uridine at position 1939 (m5U1939) in 23S rRNA. The sequence is that of 23S rRNA (uracil(1939)-C(5))-methyltransferase RlmD from Acidovorax sp. (strain JS42).